Here is a 173-residue protein sequence, read N- to C-terminus: Small ribosomal subunit protein uS7 (173 aa).

This sequence belongs to the universal ribosomal protein uS7 family. Part of the 30S ribosomal subunit. Contacts proteins S9 and S11.

Its function is as follows. One of the primary rRNA binding proteins, it binds directly to 16S rRNA where it nucleates assembly of the head domain of the 30S subunit. Is located at the subunit interface close to the decoding center, probably blocks exit of the E-site tRNA. The sequence is that of Small ribosomal subunit protein uS7 from Orientia tsutsugamushi (strain Boryong) (Rickettsia tsutsugamushi).